A 340-amino-acid chain; its full sequence is Phosphate acyltransferase (340 aa).

It belongs to the PlsX family. In terms of assembly, homodimer. Probably interacts with PlsY.

Its subcellular location is the cytoplasm. It catalyses the reaction a fatty acyl-[ACP] + phosphate = an acyl phosphate + holo-[ACP]. It participates in lipid metabolism; phospholipid metabolism. Its function is as follows. Catalyzes the reversible formation of acyl-phosphate (acyl-PO(4)) from acyl-[acyl-carrier-protein] (acyl-ACP). This enzyme utilizes acyl-ACP as fatty acyl donor, but not acyl-CoA. The polypeptide is Phosphate acyltransferase (Marinobacter nauticus (strain ATCC 700491 / DSM 11845 / VT8) (Marinobacter aquaeolei)).